Here is a 480-residue protein sequence, read N- to C-terminus: EGF-like repeat and discoidin I-like domain-containing protein 3 (480 aa).

Positions 1–23 (MKHLVAAWLLVGLSLGVPQFGKG) are cleaved as a signal peptide. In terms of domain architecture, EGF-like 1 spans 24–60 (DICNPNPCENGGICLSGLADDSFSCECPEGFAGPNCS). 3 disulfide bridges follow: C26–C37, C31–C48, and C50–C59. T73 carries O-linked (GalNAc...) threonine glycosylation. EGF-like domains are found at residues 74-117 (SAGP…IHCQ) and 119-155 (NINE…RNCQ). 3 disulfides stabilise this stretch: C78/C89, C83/C105, and C107/C116. An O-linked (Fuc...) threonine glycan is attached at T88. The short motif at 96-98 (RGD) is the Cell attachment site element. N119, I120, and E122 together coordinate Ca(2+). Intrachain disulfides connect C123–C134, C128–C143, C145–C154, C158–C314, C301–C305, and C319–C476. The Ca(2+) site is built by D136 and L137. The N-linked (GlcNAc...) asparagine glycan is linked to N140. 2 consecutive F5/8 type C domains span residues 158 to 314 (CSGP…LLGC) and 319 to 476 (CSEP…LLGC).

In terms of tissue distribution, expressed in angioblasts and early endothelial cells. By embryonic day 13.5, also expressed in a restricted group of non-endothelial cells including chondrocytes and retinal neurons.

It is found in the secreted. Promotes adhesion of endothelial cells through interaction with the alpha-v/beta-3 integrin receptor. Inhibits formation of vascular-like structures. May be involved in regulation of vascular morphogenesis of remodeling in embryonic development. The protein is EGF-like repeat and discoidin I-like domain-containing protein 3 (Edil3) of Mus musculus (Mouse).